The following is a 530-amino-acid chain: Putative ABC transporter ATP-binding protein SSO1893 (530 aa).

ABC transporter domains are found at residues 6-243 (IRDL…LGLE) and 282-516 (ILFA…EPPL). Residues 38–45 (GRSGSGKS) and 314–321 (GKNGSGKT) each bind ATP.

The protein belongs to the ABC transporter superfamily.

It is found in the cell membrane. In terms of biological role, probably part of an ABC transporter complex. Responsible for energy coupling to the transport system. In Saccharolobus solfataricus (strain ATCC 35092 / DSM 1617 / JCM 11322 / P2) (Sulfolobus solfataricus), this protein is Putative ABC transporter ATP-binding protein SSO1893.